We begin with the raw amino-acid sequence, 577 residues long: Proline--tRNA ligase (577 aa).

This sequence belongs to the class-II aminoacyl-tRNA synthetase family. ProS type 1 subfamily. As to quaternary structure, homodimer.

The protein localises to the cytoplasm. It carries out the reaction tRNA(Pro) + L-proline + ATP = L-prolyl-tRNA(Pro) + AMP + diphosphate. Catalyzes the attachment of proline to tRNA(Pro) in a two-step reaction: proline is first activated by ATP to form Pro-AMP and then transferred to the acceptor end of tRNA(Pro). As ProRS can inadvertently accommodate and process non-cognate amino acids such as alanine and cysteine, to avoid such errors it has two additional distinct editing activities against alanine. One activity is designated as 'pretransfer' editing and involves the tRNA(Pro)-independent hydrolysis of activated Ala-AMP. The other activity is designated 'posttransfer' editing and involves deacylation of mischarged Ala-tRNA(Pro). The misacylated Cys-tRNA(Pro) is not edited by ProRS. The protein is Proline--tRNA ligase of Helicobacter pylori (strain Shi470).